A 461-amino-acid polypeptide reads, in one-letter code: Argininosuccinate lyase (461 aa).

This sequence belongs to the lyase 1 family. Argininosuccinate lyase subfamily.

It localises to the cytoplasm. The enzyme catalyses 2-(N(omega)-L-arginino)succinate = fumarate + L-arginine. It functions in the pathway amino-acid biosynthesis; L-arginine biosynthesis; L-arginine from L-ornithine and carbamoyl phosphate: step 3/3. Strongly inhibited by L-arginine. Inhibitory effects are lowered at pH 7.0 compared to those at pH 8.0. At 45 degrees Celsius and pH 8.0, activity decreases to 94%, 74% and 37% in the presence of 0.6 mM, 2.8 mM and 10 mM arginine, respectively. Activity also decreases to 86% in the presence of 10 mM sodium succinate or sodium citrate. Activity does not decrease in the presence of 1 mM or 10 mM L-lysine, which has a similar structure to arginine. Functionally, catalyzes the last step of arginine biosynthesis, the conversion of argininosuccinate into L-arginine and fumarate. The protein is Argininosuccinate lyase of Synechocystis sp. (strain ATCC 27184 / PCC 6803 / Kazusa).